The sequence spans 130 residues: Small ribosomal subunit protein uS9 (130 aa).

Residues 111–130 (KERRKYGLKKARKAPQFSKR) form a disordered region.

The protein belongs to the universal ribosomal protein uS9 family.

This is Small ribosomal subunit protein uS9 from Thermoanaerobacter sp. (strain X514).